Here is a 249-residue protein sequence, read N- to C-terminus: Vesicle-associated membrane protein-associated protein A (249 aa).

Ala-2 carries the N-acetylalanine modification. Residues 2–227 (ASASGTMAKH…VSFRENVTSP (226 aa)) lie on the Cytoplasmic side of the membrane. One can recognise an MSP domain in the interval 14-131 (ILVLDPPTDL…MDSKLRCVFE (118 aa)). The phosphorylated FFAT motif binding stretch occupies residues 50–53 (KVKT). At Lys-125 the chain carries N6-acetyllysine. Ser-166 is modified (phosphoserine). Residues 169–205 (DTETRKLVEECKRLQGEMMKLSEENRLLRDEGLRLRK) are a coiled coil. At Thr-170 the chain carries Phosphothreonine. Phosphoserine occurs at positions 214, 216, and 219. A helical; Anchor for type IV membrane protein membrane pass occupies residues 228–248 (LPSLLVVIAAIFIGFFLGKFI).

This sequence belongs to the VAMP-associated protein (VAP) (TC 9.B.17) family. In terms of assembly, homodimer; disulfide-linked. Heterodimer with VAPB. Interacts with VAMP1, VAMP2, STX1A, BET1, SEC22C and with the C-terminal domain of OCLN. Interacts (via MSP domain) with OSBPL1A (via FFAT motif). Interacts (via MSP domain) with ZFYVE27; may retain ZFYVE27 in the endoplasmic reticulum and regulate its function in cell projections formation. Interacts with OSBP. Interacts (via C-terminus) with RSAD2/viperin (via C-terminus). Interacts with IFITM3. Interacts with OSBPL3 (phosphorylated form). Interacts with KIF5A in a ZFYVE27-dependent manner. Interacts (via MSP domain) with STARD3 (via phosphorylated FFAT motif); this interaction recruits VAPA to the endosome. Interacts with STARD3NL (via FFAT motif). Interacts with CERT1. Interacts with PLEKHA3 and SACM1L to form a ternary complex. Interacts with VPS13A (via FFAT motif). Interacts with RB1CC1 (via phosphorylated FFAT motif), MIGA2 (via phosphorylated FFAT motif), RMDN3 (via phosphorylated FFAT motif), KCNB1 (via phosphorylated FFAT motif) and KCNB2 (via phosphorylated FFAT motif). Interacts (via MSP domain) with WDR44 (via FFAT-like motif); the interactions connect the endoplasmic reticulum (ER) with the endosomal tubule.

The protein resides in the endoplasmic reticulum membrane. The protein localises to the cell junction. It is found in the tight junction. Its subcellular location is the cell membrane. Functionally, endoplasmic reticulum (ER)-anchored protein that mediates the formation of contact sites between the ER and endosomes via interaction with FFAT motif-containing proteins such as STARD3 or WDR44. STARD3-VAPA interaction enables cholesterol transfer from the ER to endosomes. Via interaction with WDR44 participates in neosynthesized protein export. In addition, recruited to the plasma membrane through OSBPL3 binding. The OSBPL3-VAPA complex stimulates RRAS signaling which in turn attenuates integrin beta-1 (ITGB1) activation at the cell surface. With OSBPL3, may regulate ER morphology. May play a role in vesicle trafficking. The chain is Vesicle-associated membrane protein-associated protein A from Bos taurus (Bovine).